A 494-amino-acid chain; its full sequence is Ectonucleoside triphosphate diphosphohydrolase 8 (494 aa).

The Cytoplasmic portion of the chain corresponds to Met1 to Arg8. The chain crosses the membrane as a helical span at residues Val9–Leu29. At Val30–Ser465 the chain is on the extracellular side. A disulfide bridge connects residues Cys78 and Cys102. Glu168 (proton acceptor) is an active-site residue. Cys245 and Cys291 are joined by a disulfide. N-linked (GlcNAc...) asparagine glycans are attached at residues Asn299 and Asn303. Cys328 and Cys334 are joined by a disulfide. Asn362 carries N-linked (GlcNAc...) asparagine glycosylation. Cys380 and Cys402 are disulfide-bonded. Residues Ile466–Ala486 traverse the membrane as a helical segment. The Cytoplasmic portion of the chain corresponds to Val487–Asp494.

This sequence belongs to the GDA1/CD39 NTPase family. Requires Ca(2+) as cofactor. The cofactor is Mg(2+). Post-translationally, N-glycosylated. In terms of tissue distribution, present in liver, and at lower level in jejunum and kidney. Limited to the canalicular domain of hepatocytes (at protein level).

It is found in the cell membrane. It catalyses the reaction a ribonucleoside 5'-triphosphate + 2 H2O = a ribonucleoside 5'-phosphate + 2 phosphate + 2 H(+). In terms of biological role, canalicular ectonucleoside NTPDase responsible for the main hepatic NTPDase activity. Ectonucleoside NTPDases catalyze the hydrolysis of gamma- and beta-phosphate residues of nucleotides, playing a central role in concentration of extracellular nucleotides. Has activity toward ATP, ADP, UTP and UDP, but not toward AMP. This is Ectonucleoside triphosphate diphosphohydrolase 8 (Entpd8) from Rattus norvegicus (Rat).